A 97-amino-acid polypeptide reads, in one-letter code: F-actin-capping protein subunit beta (97 aa).

Disordered regions lie at residues 1–27 and 43–66; these read RLPP…AMPS and KSGS…ETVS. The span at 43-57 shows a compositional bias: polar residues; that stretch reads KSGSGTMNLGGSLTR. At Lys-97 the chain carries N6-acetyllysine.

It belongs to the F-actin-capping protein beta subunit family. In terms of assembly, component of the F-actin capping complex, composed of a heterodimer of an alpha and a beta subunit. Subunit of dynactin, a multiprotein complex part of a tripartite complex with dynein and a adapter, such as BICDL1, BICD2 or HOOK3. The dynactin complex is built around ACTR1A/ACTB filament and consists of an actin-related filament composed of a shoulder domain, a pointed end and a barbed end. Its length is defined by its flexible shoulder domain. The soulder is composed of 2 DCTN1 subunits, 4 DCTN2 and 2 DCTN3. The 4 DCNT2 (via N-terminus) bind the ACTR1A filament and act as molecular rulers to determine the length. The pointed end is important for binding dynein-dynactin cargo adapters. Consists of 4 subunits: ACTR10, DCNT4, DCTN5 and DCTN6. The barbed end is composed of a CAPZA1:CAPZB heterodimers, which binds ACTR1A/ACTB filament and dynactin and stabilizes dynactin. Interacts with ARHGAP17. Interaction with RCSD1/CAPZIP. Component of the WASH complex, composed of F-actin-capping protein subunit alpha (CAPZA1, CAPZA2 or CAPZA3), F-actin-capping protein subunit beta (CAPZB), WASH (WASHC1, WASH2P, WASH3P, WASH4P, WASH5P or WASH6P), WASHC2 (WASHC2A or WASHC2C), WASHC3, WASHC4 and WASHC5. Interacts with ACTG1. Directly interacts with CRACD; this interaction decreases binding to actin.

The protein resides in the cytoplasm. It is found in the cytoskeleton. The protein localises to the myofibril. Its subcellular location is the sarcomere. In terms of biological role, F-actin-capping proteins bind in a Ca(2+)-independent manner to the fast growing ends of actin filaments (barbed end) thereby blocking the exchange of subunits at these ends. Unlike other capping proteins (such as gelsolin and severin), these proteins do not sever actin filaments. Plays a role in the regulation of cell morphology and cytoskeletal organization. Forms, with CAPZB, the barbed end of the fast growing ends of actin filaments in the dynactin complex and stabilizes dynactin structure. The dynactin multiprotein complex activates the molecular motor dynein for ultra-processive transport along microtubules. This is F-actin-capping protein subunit beta from Mesocricetus auratus (Golden hamster).